The following is a 245-amino-acid chain: Ribonuclease 3 (245 aa).

An RNase III domain is found at 19 to 148; sequence FKVFQEKIGI…FIGALYLDQG (130 aa). Glu61 provides a ligand contact to Mg(2+). Asp65 is an active-site residue. Positions 134 and 137 each coordinate Mg(2+). The active site involves Glu137. Residues 174–243 form the DRBM domain; it reads DYKSQLQELI…AAEALKKLKE (70 aa).

It belongs to the ribonuclease III family. Homodimer. It depends on Mg(2+) as a cofactor.

It localises to the cytoplasm. It carries out the reaction Endonucleolytic cleavage to 5'-phosphomonoester.. Functionally, digests double-stranded RNA. Involved in the processing of primary rRNA transcript to yield the immediate precursors to the large and small rRNAs (23S and 16S). Processes some mRNAs, and tRNAs when they are encoded in the rRNA operon. Processes pre-crRNA and tracrRNA of type II CRISPR loci if present in the organism. The sequence is that of Ribonuclease 3 from Bacillus cereus (strain ATCC 14579 / DSM 31 / CCUG 7414 / JCM 2152 / NBRC 15305 / NCIMB 9373 / NCTC 2599 / NRRL B-3711).